The chain runs to 383 residues: Aurachin C monooxygenase/isomerase (383 aa).

FAD is bound by residues glycine 15, serine 47, valine 128, aspartate 285, and 295–299; that span reads GQGGC.

Requires FAD as cofactor.

It carries out the reaction aurachin C + NADH + O2 + H(+) = 4-hydroxy-2-methyl-3-oxo-4-[(2E,6E)-farnesyl]-3,4-dihydroquinoline 1-oxide + NAD(+) + H2O. It catalyses the reaction aurachin C + NADPH + O2 + H(+) = 4-hydroxy-2-methyl-3-oxo-4-[(2E,6E)-farnesyl]-3,4-dihydroquinoline 1-oxide + NADP(+) + H2O. The catalysed reaction is aurachin C + NADH + O2 + H(+) = aurachin C epoxide + NAD(+) + H2O. The enzyme catalyses aurachin C + NADPH + O2 + H(+) = aurachin C epoxide + NADP(+) + H2O. It carries out the reaction aurachin C epoxide = 2-hydroxy-1a-methyl-7a-[(2E,6E)-farnesyl]-1a,2-dihydrooxireno[2,3-b]quinolin-7(7aH)-one. It catalyses the reaction 2-hydroxy-1a-methyl-7a-[(2E,6E)-farnesyl]-1a,2-dihydrooxireno[2,3-b]quinolin-7(7aH)-one = 4-hydroxy-2-methyl-3-oxo-4-[(2E,6E)-farnesyl]-3,4-dihydroquinoline 1-oxide. Functionally, catalyzes the initial step in the conversion of aurachin C to aurachin B. Catalyzes the epoxidation of the C(2)-C(3) double bond of aurachin C, which is followed by a semipinacol rearrangement, causing migration of the farnesyl group from C(3) to C(4). Accepts both NADH and NADPH, but has a preference for NADH. This chain is Aurachin C monooxygenase/isomerase, found in Stigmatella aurantiaca.